The chain runs to 411 residues: NAD-dependent dihydropyrimidine dehydrogenase subunit PreA (411 aa).

Residues Asn76 and Asn134–Ser136 each bind substrate. Residue Cys137 is the Nucleophile of the active site. Asn201 to Thr202 serves as a coordination point for substrate. 4Fe-4S ferredoxin-type domains follow at residues Val335–Lys367 and Arg369–Val398. [4Fe-4S] cluster-binding residues include Cys344, Cys347, Cys350, Cys354, Cys378, Cys381, Cys384, and Cys388.

The protein belongs to the dihydropyrimidine dehydrogenase family. Heterotetramer of 2 PreA and 2 PreT subunits. The cofactor is [4Fe-4S] cluster.

The enzyme catalyses 5,6-dihydrouracil + NAD(+) = uracil + NADH + H(+). It catalyses the reaction 5,6-dihydrothymine + NAD(+) = thymine + NADH + H(+). Involved in pyrimidine base degradation. Catalyzes physiologically the reduction of uracil to 5,6-dihydrouracil (DHU) by using NADH as a specific cosubstrate. It also catalyzes the reverse reaction and the reduction of thymine to 5,6-dihydrothymine (DHT). This chain is NAD-dependent dihydropyrimidine dehydrogenase subunit PreA (preA), found in Escherichia coli O157:H7.